A 592-amino-acid chain; its full sequence is MRTHYCGHLNKSLAGQTVELCGWVNRRRDLGGLIFIDMRDREGIVQVVVDPDMADAYEVANTLRNEFCIKLTGEVRVRPESQVNKDMATGEVEILAKGLEIINRSDVLPLDFNQKNSEEQRLKYRYLDLRRPEMSDRIKLRAKASSFVRRFLDDNGFLDIETPVLTKATPEGARDYLVPSRVHKGSFYALPQSPQLFKQLLMMSGFDRYYQIVKCFRDEDLRADRQPEFTQIDIETSFMTADQVREVTEKMVREMWQELLNVDLGEFPVMPFSEAIRRFGSDKPDLRNPLELVDVADLVKDVEFKVFSGPANDEKGRVAVIRVPGGAELTRKQIDGYAEFVGIYGAKGLAWMKVNDRAAGVEGIQSPVAKFLSEDVINGILDRTQAESGDIILFGADKANIVAEALGALRLKLGKDLGLTKEGTWAPLWVVDFPMFEEDDEGNLHAMHHPFTSPLGVTAEELKANPAVANSNAYDMVLNGYEVGGGSVRIHNAEMQAAVFDILGIDAEEQQLKFGFLLDALKFGTPPHAGLAFGLDRLVMLLCGTENIRDVIAFPKTTAAACLLTDAPSIANPAALEELAIAVTAAKAKDAE.

E171 provides a ligand contact to L-aspartate. Residues 195–198 form an aspartate region; it reads QLFK. R217 provides a ligand contact to L-aspartate. ATP contacts are provided by residues 217–219 and Q226; that span reads RDE. L-aspartate is bound at residue H448. Residue E482 coordinates ATP. R489 contacts L-aspartate. Residue 534 to 537 coordinates ATP; it reads GLDR.

The protein belongs to the class-II aminoacyl-tRNA synthetase family. Type 1 subfamily. Homodimer.

The protein localises to the cytoplasm. It carries out the reaction tRNA(Asp) + L-aspartate + ATP = L-aspartyl-tRNA(Asp) + AMP + diphosphate. Catalyzes the attachment of L-aspartate to tRNA(Asp) in a two-step reaction: L-aspartate is first activated by ATP to form Asp-AMP and then transferred to the acceptor end of tRNA(Asp). The protein is Aspartate--tRNA ligase of Vibrio parahaemolyticus serotype O3:K6 (strain RIMD 2210633).